A 512-amino-acid polypeptide reads, in one-letter code: Cobyric acid synthase (512 aa).

The region spanning 254 to 455 (EIDIAVVKLP…LHGLFDNKAL (202 aa)) is the GATase cobBQ-type domain. The Nucleophile role is filled by cysteine 335. The active site involves histidine 447.

This sequence belongs to the CobB/CobQ family. CobQ subfamily.

It functions in the pathway cofactor biosynthesis; adenosylcobalamin biosynthesis. In terms of biological role, catalyzes amidations at positions B, D, E, and G on adenosylcobyrinic A,C-diamide. NH(2) groups are provided by glutamine, and one molecule of ATP is hydrogenolyzed for each amidation. This is Cobyric acid synthase from Desulforamulus reducens (strain ATCC BAA-1160 / DSM 100696 / MI-1) (Desulfotomaculum reducens).